Reading from the N-terminus, the 98-residue chain is Large ribosomal subunit protein uL23 (98 aa).

Belongs to the universal ribosomal protein uL23 family. In terms of assembly, part of the 50S ribosomal subunit. Contacts protein L29, and trigger factor when it is bound to the ribosome.

In terms of biological role, one of the early assembly proteins it binds 23S rRNA. One of the proteins that surrounds the polypeptide exit tunnel on the outside of the ribosome. Forms the main docking site for trigger factor binding to the ribosome. In Hydrogenovibrio crunogenus (strain DSM 25203 / XCL-2) (Thiomicrospira crunogena), this protein is Large ribosomal subunit protein uL23.